The sequence spans 264 residues: Somatomedin-B and thrombospondin type-1 domain-containing protein (264 aa).

A signal peptide spans 1-20; the sequence is MRTLWMALCALSRLWPGAQA. Residues 24-75 enclose the SMB domain; sequence EAGRCCPGRDPACFARGWRLDRVYGTCFCDQACRFTGDCCFDYDRACPARPC. Disulfide bonds link C28–C36, C28–C52, C36–C70, C50–C52, C50–C63, C56–C62, and C63–C70. The TSP type-1 domain occupies 74–127; that stretch reads PCFVGEWSPWSGCADQCKPTTRVRRRSVQQEPQNGGAPCPPLEERAGCLEYSTP. N227 carries N-linked (GlcNAc...) asparagine glycosylation.

The protein belongs to the thrombospondin family. As to expression, detected in aorta extracellular matrix (at protein level).

The protein resides in the secreted. It is found in the extracellular space. Its subcellular location is the extracellular matrix. In Homo sapiens (Human), this protein is Somatomedin-B and thrombospondin type-1 domain-containing protein (SBSPON).